The chain runs to 239 residues: uncharacterized protein (239 aa).

An N-terminal signal peptide occupies residues 1 to 23; it reads MKTMVAMLLAAVGVAVSASSTLA. The span at 220–230 shows a compositional bias: basic and acidic residues; it reads AHPKQTLRDQR. The tract at residues 220-239 is disordered; sequence AHPKQTLRDQRPAGGDEITK.

This is an uncharacterized protein from Sinorhizobium fredii (strain NBRC 101917 / NGR234).